Reading from the N-terminus, the 185-residue chain is Lysozyme g (185 aa).

Residue E73 is part of the active site.

Belongs to the glycosyl hydrolase 23 family.

It catalyses the reaction Hydrolysis of (1-&gt;4)-beta-linkages between N-acetylmuramic acid and N-acetyl-D-glucosamine residues in a peptidoglycan and between N-acetyl-D-glucosamine residues in chitodextrins.. This chain is Lysozyme g, found in Cyprinus carpio (Common carp).